The chain runs to 354 residues: DNA polymerase IV (354 aa).

Residues 14 to 198 (IIHIDMDAFF…MDIAKFHGVG (185 aa)) enclose the UmuC domain. Mg(2+) contacts are provided by D18 and D116. E117 is an active-site residue.

It belongs to the DNA polymerase type-Y family. In terms of assembly, monomer. The cofactor is Mg(2+).

It localises to the cytoplasm. It carries out the reaction DNA(n) + a 2'-deoxyribonucleoside 5'-triphosphate = DNA(n+1) + diphosphate. Poorly processive, error-prone DNA polymerase involved in untargeted mutagenesis. Copies undamaged DNA at stalled replication forks, which arise in vivo from mismatched or misaligned primer ends. These misaligned primers can be extended by PolIV. Exhibits no 3'-5' exonuclease (proofreading) activity. May be involved in translesional synthesis, in conjunction with the beta clamp from PolIII. The sequence is that of DNA polymerase IV from Streptococcus gordonii (strain Challis / ATCC 35105 / BCRC 15272 / CH1 / DL1 / V288).